Consider the following 216-residue polypeptide: Probable transaldolase (216 aa).

Lys84 functions as the Schiff-base intermediate with substrate in the catalytic mechanism.

This sequence belongs to the transaldolase family. Type 3B subfamily.

The protein localises to the cytoplasm. The enzyme catalyses D-sedoheptulose 7-phosphate + D-glyceraldehyde 3-phosphate = D-erythrose 4-phosphate + beta-D-fructose 6-phosphate. The protein operates within carbohydrate degradation; pentose phosphate pathway; D-glyceraldehyde 3-phosphate and beta-D-fructose 6-phosphate from D-ribose 5-phosphate and D-xylulose 5-phosphate (non-oxidative stage): step 2/3. Transaldolase is important for the balance of metabolites in the pentose-phosphate pathway. This Exiguobacterium sp. (strain ATCC BAA-1283 / AT1b) protein is Probable transaldolase.